The following is a 413-amino-acid chain: Alpha-1-antiproteinase (413 aa).

The first 24 residues, 1-24 (MTPSISWRLLLLAGLCCLVPSYLA), serve as a signal peptide directing secretion. Ser-33 bears the Phosphoserine mark. 3 N-linked (GlcNAc...) asparagine glycosylation sites follow: Asn-64, Asn-101, and Asn-265. The RCL stretch occupies residues 368-387 (ATTIVEAVFMSLPPILHFNH). Residue Ser-378 is modified to Phosphoserine.

Belongs to the serpin family. As to quaternary structure, interacts with CELA2A. Interacts with ERGIC3 and LMAN1/ERGIC53. Interacts with PRSS1/Trypsin.

It localises to the secreted. Functionally, inhibitor of serine proteases. The primary target is elastase, but also has a moderate affinity for plasmin and thrombin. The chain is Alpha-1-antiproteinase (Serpina1) from Mus saxicola (Brown spiny mouse).